A 666-amino-acid chain; its full sequence is Vicilin-like antimicrobial peptides 2-1 (666 aa).

The first 27 residues, 1-27 (MAINTSNLCSLLFLLSLFLLSTTVSLA), serve as a signal peptide directing secretion. Disordered stretches follow at residues 161–191 (QQKR…DPQQ) and 219–254 (QQRQ…PYYF). 2 Cupin type-1 domains span residues 271–410 (SVLE…EKLR) and 455–625 (YNLF…KEVE). The segment at 629–655 (NSQDQSIFFPGPRQHQQQSPRSTKQQQ) is disordered. A compositionally biased stretch (low complexity) spans 642–655 (QHQQQSPRSTKQQQ).

Belongs to the 7S seed storage protein family.

It is found in the secreted. In terms of biological role, antimicrobial peptides 2b, 2c and 2d have antibacterial and antifungal activity against a range of species. In Macadamia integrifolia (Macadamia nut), this protein is Vicilin-like antimicrobial peptides 2-1.